A 318-amino-acid polypeptide reads, in one-letter code: Ribose-phosphate pyrophosphokinase 1 (318 aa).

96-101 (RQDKKD) contributes to the ATP binding site. D128, H130, D139, and D143 together coordinate Mg(2+). H130 contacts ATP. Residues 212 to 227 (KDRVAILVDDMADTCG) form a binding of phosphoribosylpyrophosphate region.

It belongs to the ribose-phosphate pyrophosphokinase family. In terms of assembly, homodimer. The active form is probably a hexamer composed of 3 homodimers. Mg(2+) serves as cofactor.

The enzyme catalyses D-ribose 5-phosphate + ATP = 5-phospho-alpha-D-ribose 1-diphosphate + AMP + H(+). Its pathway is metabolic intermediate biosynthesis; 5-phospho-alpha-D-ribose 1-diphosphate biosynthesis; 5-phospho-alpha-D-ribose 1-diphosphate from D-ribose 5-phosphate (route I): step 1/1. Its activity is regulated as follows. Activated by magnesium and inorganic phosphate. Catalyzes the synthesis of phosphoribosylpyrophosphate (PRPP) that is essential for nucleotide synthesis. In Macaca fascicularis (Crab-eating macaque), this protein is Ribose-phosphate pyrophosphokinase 1 (PRPS1).